The sequence spans 377 residues: Succinyl-diaminopimelate desuccinylase (377 aa).

Residue His-66 coordinates Zn(2+). The active site involves Asp-68. Asp-99 contacts Zn(2+). The Proton acceptor role is filled by Glu-133. The Zn(2+) site is built by Glu-134, Glu-163, and His-349.

This sequence belongs to the peptidase M20A family. DapE subfamily. As to quaternary structure, homodimer. Zn(2+) serves as cofactor. It depends on Co(2+) as a cofactor.

The enzyme catalyses N-succinyl-(2S,6S)-2,6-diaminopimelate + H2O = (2S,6S)-2,6-diaminopimelate + succinate. The protein operates within amino-acid biosynthesis; L-lysine biosynthesis via DAP pathway; LL-2,6-diaminopimelate from (S)-tetrahydrodipicolinate (succinylase route): step 3/3. Its function is as follows. Catalyzes the hydrolysis of N-succinyl-L,L-diaminopimelic acid (SDAP), forming succinate and LL-2,6-diaminopimelate (DAP), an intermediate involved in the bacterial biosynthesis of lysine and meso-diaminopimelic acid, an essential component of bacterial cell walls. In Legionella pneumophila (strain Lens), this protein is Succinyl-diaminopimelate desuccinylase.